The primary structure comprises 367 residues: 3-dehydroquinate synthase (367 aa).

Residues 99–103 (GVVGD), 123–124 (TT), Lys136, Lys145, and 163–166 (FLRT) each bind NAD(+). Zn(2+) contacts are provided by Glu178, His242, and His259.

It belongs to the sugar phosphate cyclases superfamily. Dehydroquinate synthase family. Requires Co(2+) as cofactor. Zn(2+) is required as a cofactor. It depends on NAD(+) as a cofactor.

It localises to the cytoplasm. It catalyses the reaction 7-phospho-2-dehydro-3-deoxy-D-arabino-heptonate = 3-dehydroquinate + phosphate. It functions in the pathway metabolic intermediate biosynthesis; chorismate biosynthesis; chorismate from D-erythrose 4-phosphate and phosphoenolpyruvate: step 2/7. Functionally, catalyzes the conversion of 3-deoxy-D-arabino-heptulosonate 7-phosphate (DAHP) to dehydroquinate (DHQ). The protein is 3-dehydroquinate synthase of Chlorobaculum parvum (strain DSM 263 / NCIMB 8327) (Chlorobium vibrioforme subsp. thiosulfatophilum).